Reading from the N-terminus, the 185-residue chain is Elongation factor P (185 aa).

It belongs to the elongation factor P family.

The protein resides in the cytoplasm. It functions in the pathway protein biosynthesis; polypeptide chain elongation. Involved in peptide bond synthesis. Stimulates efficient translation and peptide-bond synthesis on native or reconstituted 70S ribosomes in vitro. Probably functions indirectly by altering the affinity of the ribosome for aminoacyl-tRNA, thus increasing their reactivity as acceptors for peptidyl transferase. The chain is Elongation factor P from Mesoplasma florum (strain ATCC 33453 / NBRC 100688 / NCTC 11704 / L1) (Acholeplasma florum).